A 361-amino-acid polypeptide reads, in one-letter code: Peptide chain release factor 1 (361 aa).

At Gln236 the chain carries N5-methylglutamine. The span at Thr285 to Arg309 shows a compositional bias: basic and acidic residues. The segment at Thr285–Phe313 is disordered.

It belongs to the prokaryotic/mitochondrial release factor family. In terms of processing, methylated by PrmC. Methylation increases the termination efficiency of RF1.

Its subcellular location is the cytoplasm. In terms of biological role, peptide chain release factor 1 directs the termination of translation in response to the peptide chain termination codons UAG and UAA. This Methylorubrum populi (strain ATCC BAA-705 / NCIMB 13946 / BJ001) (Methylobacterium populi) protein is Peptide chain release factor 1.